Here is a 353-residue protein sequence, read N- to C-terminus: Ribosomal RNA large subunit methyltransferase M (353 aa).

S-adenosyl-L-methionine is bound by residues S183, 216–219 (APGG), D235, D255, and D271. K300 acts as the Proton acceptor in catalysis.

The protein belongs to the class I-like SAM-binding methyltransferase superfamily. RNA methyltransferase RlmE family. RlmM subfamily. Monomer.

The protein localises to the cytoplasm. It carries out the reaction cytidine(2498) in 23S rRNA + S-adenosyl-L-methionine = 2'-O-methylcytidine(2498) in 23S rRNA + S-adenosyl-L-homocysteine + H(+). In terms of biological role, catalyzes the 2'-O-methylation at nucleotide C2498 in 23S rRNA. The polypeptide is Ribosomal RNA large subunit methyltransferase M (Azotobacter vinelandii (strain DJ / ATCC BAA-1303)).